Here is a 196-residue protein sequence, read N- to C-terminus: Large ribosomal subunit protein mL66 (196 aa).

The N-terminal 34 residues, 1 to 34 (MAALRRLVSGCGRQLQAFLAGPAATGWLWLPARG), are a transit peptide targeting the mitochondrion.

This sequence belongs to the bacterial ribosomal protein bS18 family. Mitochondrion-specific ribosomal protein mL66 subfamily. Component of the mitochondrial ribosome small subunit (28S) which comprises a 12S rRNA and about 30 distinct proteins.

It localises to the mitochondrion. This Mus musculus (Mouse) protein is Large ribosomal subunit protein mL66 (Mrps18a).